A 426-amino-acid chain; its full sequence is Glutamate-1-semialdehyde 2,1-aminomutase (426 aa).

The residue at position 265 (Lys265) is an N6-(pyridoxal phosphate)lysine.

It belongs to the class-III pyridoxal-phosphate-dependent aminotransferase family. HemL subfamily. As to quaternary structure, homodimer. Requires pyridoxal 5'-phosphate as cofactor.

Its subcellular location is the cytoplasm. It carries out the reaction (S)-4-amino-5-oxopentanoate = 5-aminolevulinate. It functions in the pathway porphyrin-containing compound metabolism; protoporphyrin-IX biosynthesis; 5-aminolevulinate from L-glutamyl-tRNA(Glu): step 2/2. In Salmonella choleraesuis (strain SC-B67), this protein is Glutamate-1-semialdehyde 2,1-aminomutase.